The primary structure comprises 98 residues: Large ribosomal subunit protein uL23 (98 aa).

Belongs to the universal ribosomal protein uL23 family. In terms of assembly, part of the 50S ribosomal subunit. Contacts protein L29, and trigger factor when it is bound to the ribosome.

One of the early assembly proteins it binds 23S rRNA. One of the proteins that surrounds the polypeptide exit tunnel on the outside of the ribosome. Forms the main docking site for trigger factor binding to the ribosome. The sequence is that of Large ribosomal subunit protein uL23 from Parafrankia sp. (strain EAN1pec).